Here is a 789-residue protein sequence, read N- to C-terminus: Endonuclease MutS2 (789 aa).

Residue 334–341 (GPNTGGKT) participates in ATP binding. Positions 690 to 714 (PEKDIQQSGTGKIMKSKTGDTKSEV) are disordered. Positions 714–789 (VDVRGKNLEE…GMGVTIVELK (76 aa)) constitute a Smr domain.

Belongs to the DNA mismatch repair MutS family. MutS2 subfamily. Homodimer. Binds to stalled ribosomes, contacting rRNA.

Its function is as follows. Endonuclease that is involved in the suppression of homologous recombination and thus may have a key role in the control of bacterial genetic diversity. Acts as a ribosome collision sensor, splitting the ribosome into its 2 subunits. Detects stalled/collided 70S ribosomes which it binds and splits by an ATP-hydrolysis driven conformational change. Acts upstream of the ribosome quality control system (RQC), a ribosome-associated complex that mediates the extraction of incompletely synthesized nascent chains from stalled ribosomes and their subsequent degradation. Probably generates substrates for RQC. In Alkaliphilus metalliredigens (strain QYMF), this protein is Endonuclease MutS2.